A 267-amino-acid polypeptide reads, in one-letter code: L-aspartate dehydrogenase 2 (267 aa).

The NAD(+) site is built by alanine 123 and asparagine 189. The active site involves histidine 219.

It belongs to the L-aspartate dehydrogenase family.

It catalyses the reaction L-aspartate + NADP(+) + H2O = oxaloacetate + NH4(+) + NADPH + H(+). The catalysed reaction is L-aspartate + NAD(+) + H2O = oxaloacetate + NH4(+) + NADH + H(+). The protein operates within cofactor biosynthesis; NAD(+) biosynthesis; iminoaspartate from L-aspartate (dehydrogenase route): step 1/1. Its function is as follows. Specifically catalyzes the NAD or NADP-dependent dehydrogenation of L-aspartate to iminoaspartate. This Bordetella bronchiseptica (strain ATCC BAA-588 / NCTC 13252 / RB50) (Alcaligenes bronchisepticus) protein is L-aspartate dehydrogenase 2.